A 240-amino-acid polypeptide reads, in one-letter code: Phosducin-like protein 2 (240 aa).

A Phosducin domain is found at glutamine 38–alanine 201. The segment at phenylalanine 89–lysine 240 is thioredoxin fold.

This sequence belongs to the phosducin family. In terms of assembly, interacts with the CCT chaperonin complex and actin. As to expression, testis-specific (at protein level).

It is found in the endoplasmic reticulum. Essential for male fertility, spermiogenesis and acrosome formation. This is Phosducin-like protein 2 (Pdcl2) from Mus musculus (Mouse).